A 155-amino-acid polypeptide reads, in one-letter code: Large ribosomal subunit protein uL15 (155 aa).

Over residues 1-16 (MVRRFKRAVKYRRGSR) the composition is skewed to basic residues. The tract at residues 1-35 (MVRRFKRAVKYRRGSRTHGWGRVGQHRKSGGSGGK) is disordered.

Belongs to the universal ribosomal protein uL15 family. Part of the 50S ribosomal subunit.

Binds to the 23S rRNA. The protein is Large ribosomal subunit protein uL15 of Pyrobaculum arsenaticum (strain DSM 13514 / JCM 11321 / PZ6).